Here is a 100-residue protein sequence, read N- to C-terminus: Urease subunit gamma (100 aa).

This sequence belongs to the urease gamma subunit family. In terms of assembly, heterotrimer of UreA (gamma), UreB (beta) and UreC (alpha) subunits. Three heterotrimers associate to form the active enzyme.

It localises to the cytoplasm. The catalysed reaction is urea + 2 H2O + H(+) = hydrogencarbonate + 2 NH4(+). Its pathway is nitrogen metabolism; urea degradation; CO(2) and NH(3) from urea (urease route): step 1/1. The protein is Urease subunit gamma of Pseudomonas putida (strain W619).